A 98-amino-acid chain; its full sequence is Alpha-elicitin hibernalin (98 aa).

Intrachain disulfides connect cysteine 3–cysteine 71, cysteine 27–cysteine 56, and cysteine 51–cysteine 95.

The protein resides in the secreted. Functionally, induces local and distal defense responses (incompatible hypersensitive reaction) in plants from the solanaceae and cruciferae families. Elicits leaf necrosis and causes the accumulation of pathogenesis-related proteins. Might interact with the lipidic molecules of the plasma membrane. The sequence is that of Alpha-elicitin hibernalin from Phytophthora hibernalis.